Here is a 557-residue protein sequence, read N- to C-terminus: Venom carboxylesterase-6 (557 aa).

The signal sequence occupies residues 1-21; the sequence is MYMLKLSYILLFLGFVKFSWQ. The cysteines at positions 88 and 108 are disulfide-linked. Residue Asn-145 is glycosylated (N-linked (GlcNAc...) asparagine). Ser-212 serves as the catalytic Acyl-ester intermediate. A disulfide bridge connects residues Cys-264 and Cys-275. Glu-341 functions as the Charge relay system in the catalytic mechanism. Asn-374 carries N-linked (GlcNAc...) asparagine glycosylation. His-464 functions as the Charge relay system in the catalytic mechanism. 3 N-linked (GlcNAc...) asparagine glycosylation sites follow: Asn-478, Asn-528, and Asn-542.

This sequence belongs to the type-B carboxylesterase/lipase family. As to expression, expressed by the venom gland.

Its subcellular location is the secreted. It carries out the reaction a carboxylic ester + H2O = an alcohol + a carboxylate + H(+). The polypeptide is Venom carboxylesterase-6 (Apis mellifera (Honeybee)).